The primary structure comprises 380 residues: MSKRDFYEVLGVGRDAGERDIKKAYKRLAMKFHPDRNQEADATEKFKEVKTAYEILTDPQKKAAYDQYGHAAFEQGSGGGGYGGGGGADFGDIFGDVFGDIFGGAGGGRRQQQRAQRGSDLRYNMELTLEEAVRGCSKEIRVPTLVGCDSCDGSGAKRGSSATTCGTCHGQGQVQMRQGFFAVQQACPHCHGRGKIIKDPCNSCHGQGRVEKTKTLSVKIPAGVDTGDRIRLSGEGEAGEFGAPAGDLYVQVHVAEHSIFERDGNNLYCEVPVSFTMAAVGGEVEVPTLNGRVNLKVPSETQTGRMFRMRGKGVKSVRGGAVGDLICKLVVETPVNLSSHQKELLKELEESFGGKAAGKHKPKSEGFFNGVKKFFDDLTG.

The J domain occupies 5-69 (DFYEVLGVGR…QKKAAYDQYG (65 aa)). A CR-type zinc finger spans residues 135–213 (GCSKEIRVPT…CHGQGRVEKT (79 aa)). Residues C148, C151, C165, C168, C187, C190, C201, and C204 each contribute to the Zn(2+) site. CXXCXGXG motif repeat units follow at residues 148–155 (CDSCDGSG), 165–172 (CGTCHGQG), 187–194 (CPHCHGRG), and 201–208 (CNSCHGQG).

It belongs to the DnaJ family. Homodimer. Zn(2+) is required as a cofactor.

The protein localises to the cytoplasm. Participates actively in the response to hyperosmotic and heat shock by preventing the aggregation of stress-denatured proteins and by disaggregating proteins, also in an autonomous, DnaK-independent fashion. Unfolded proteins bind initially to DnaJ; upon interaction with the DnaJ-bound protein, DnaK hydrolyzes its bound ATP, resulting in the formation of a stable complex. GrpE releases ADP from DnaK; ATP binding to DnaK triggers the release of the substrate protein, thus completing the reaction cycle. Several rounds of ATP-dependent interactions between DnaJ, DnaK and GrpE are required for fully efficient folding. Also involved, together with DnaK and GrpE, in the DNA replication of plasmids through activation of initiation proteins. The sequence is that of Chaperone protein DnaJ from Photobacterium profundum (strain SS9).